Consider the following 237-residue polypeptide: Concanavalin V (237 aa).

Glu8 and Asp10 together coordinate Mn(2+). Residues Asp10, Tyr12, Asn14, and Asp19 each coordinate Ca(2+). Asn14 contacts a carbohydrate. Mn(2+) contacts are provided by Asp19 and His24. A carbohydrate contacts are provided by residues Gly70, 98-100, Asp208, and Arg228; that span reads GLY.

It belongs to the leguminous lectin family. In terms of assembly, homotetramer. Concanavalin A-like lectins of the Diocleinae subtribe undergo proteolytic processing referred to as circular permutation. The propeptide is split into an N-terminal and a C-terminal part, the gamma and beta chain, respectively. These are then religated in beta-gamma order to form the mature alpha chain. The beta and gamma chains can often be detected in cell extracts. Residues 1-118 of the mature chain, as displayed here, probably constitute the beta chain in the propeptide, residues 119-237 the gamma chain.

In terms of biological role, D-mannose/D-glucose-binding lectin which binds alpha-methyl-D-mannoside, D-mannose and D-glucose in that order. Also binds to serum fetuin and ovalbumin. Has hemagglutinating activity towards rabbit erythrocytes. Is not toxic towards larvae of the brine shrimp Artemia. Induces relaxation in rat endothelized aorta. Shows a transient edematogenic effect in rat. The chain is Concanavalin V from Canavalia cathartica (Jackbean).